The chain runs to 167 residues: NADH-quinone oxidoreductase subunit B (167 aa).

Positions 40, 41, 105, and 134 each coordinate [4Fe-4S] cluster.

Belongs to the complex I 20 kDa subunit family. In terms of assembly, NDH-1 is composed of 14 different subunits. Subunits NuoB, C, D, E, F, and G constitute the peripheral sector of the complex. [4Fe-4S] cluster is required as a cofactor.

It is found in the cell inner membrane. It catalyses the reaction a quinone + NADH + 5 H(+)(in) = a quinol + NAD(+) + 4 H(+)(out). In terms of biological role, NDH-1 shuttles electrons from NADH, via FMN and iron-sulfur (Fe-S) centers, to quinones in the respiratory chain. The immediate electron acceptor for the enzyme in this species is believed to be ubiquinone. Couples the redox reaction to proton translocation (for every two electrons transferred, four hydrogen ions are translocated across the cytoplasmic membrane), and thus conserves the redox energy in a proton gradient. The sequence is that of NADH-quinone oxidoreductase subunit B from Campylobacter jejuni subsp. jejuni serotype O:6 (strain 81116 / NCTC 11828).